The following is a 110-amino-acid chain: Putative anti-sigma factor antagonist TM_1442 (110 aa).

Residues 4-110 enclose the STAS domain; sequence LKLDIVEQDD…FKITDTVEEA (107 aa). At Ser-59 the chain carries Phosphoserine.

This sequence belongs to the anti-sigma-factor antagonist family. In terms of processing, phosphorylated on a serine residue.

Functionally, in the phosphorylated form it could act as an anti-anti-sigma factor that counteracts an anti-sigma factor and thus releases a sigma factor from inhibition. This chain is Putative anti-sigma factor antagonist TM_1442, found in Thermotoga maritima (strain ATCC 43589 / DSM 3109 / JCM 10099 / NBRC 100826 / MSB8).